The sequence spans 387 residues: Succinate--CoA ligase [ADP-forming] subunit beta (387 aa).

The ATP-grasp domain occupies 9–236 (RDLFEKYGVP…KAAADPLEAK (228 aa)). Residues K45, 52–54 (GRG), A94, and E99 contribute to the ATP site. N191 and D205 together coordinate Mg(2+). Substrate contacts are provided by residues N256 and 318-320 (GIT).

It belongs to the succinate/malate CoA ligase beta subunit family. In terms of assembly, heterotetramer of two alpha and two beta subunits. Requires Mg(2+) as cofactor.

The enzyme catalyses succinate + ATP + CoA = succinyl-CoA + ADP + phosphate. It carries out the reaction GTP + succinate + CoA = succinyl-CoA + GDP + phosphate. The protein operates within carbohydrate metabolism; tricarboxylic acid cycle; succinate from succinyl-CoA (ligase route): step 1/1. In terms of biological role, succinyl-CoA synthetase functions in the citric acid cycle (TCA), coupling the hydrolysis of succinyl-CoA to the synthesis of either ATP or GTP and thus represents the only step of substrate-level phosphorylation in the TCA. The beta subunit provides nucleotide specificity of the enzyme and binds the substrate succinate, while the binding sites for coenzyme A and phosphate are found in the alpha subunit. The chain is Succinate--CoA ligase [ADP-forming] subunit beta from Leifsonia xyli subsp. xyli (strain CTCB07).